The chain runs to 154 residues: uncharacterized protein (154 aa).

A run of 4 helical transmembrane segments spans residues 15–37 (DFSF…ALIT), 58–80 (FAAM…WLWG), 95–116 (LGAL…FAFT), and 123–145 (LVIS…FVPH).

It is found in the cell membrane. This is an uncharacterized protein from Archaeoglobus fulgidus (strain ATCC 49558 / DSM 4304 / JCM 9628 / NBRC 100126 / VC-16).